A 788-amino-acid chain; its full sequence is MLNSVKKLLGDSQKRKLKKYEQLVQEINNLEEKLSDLSDEELRHKTITFKDMLRDGKTVDDIKVEAFAVVREAAKRVLGLRHYDVQLIGGLVLLEGNIAEMPTGEGKTLVSSLPTYVRALEGKGVHVITVNDYLAKRDKELIGQVHEFLGLKVGLNIPQIDPSEKKLAYEADITYGIGTEFGFDYLRDNMAASKNEQVQRPYHFAIIDEIDSVLIDEAKTPLIIAGKKSSSSDLHYLCAKVIKSFQDTLHYTYDAESKSASFTEDGITKIEDLFDIDNLYDLEHQTLYHYMIQALRAHVAFQCDVDYIVHDEKILLVDIFTGRVMDGRSLSDGLHQALEAKEGLEITEENQTQASITIQNFFRMYPALSGMTGTAKTEEKEFNRVYNMEVMPIPTNRPIIREDKKDVVYVTADAKYKAVREDVLKHNKQGRPILIGTMSILQSETVARYLDEANITYQLLNAKSAEQEADLIATAGQKGQITIATNMAGRGTDILLGEGVHELGGLHVIGTERHESRRVDNQLKGRAGRQGDPGSSQFFLSLEDEMLKRFAQEEVEKLTKSLKTDETGLILTSKVHDFVNRTQLICEGSHFSMREYNLKLDDVINDQRNVIYKLRNNLLQEDTNMIEIIIPMIDHAVEAISKQYLVEGMLPEEWDFASLTASLNEILSVENMPSLSANNVHSPEDLQSVLKETLSLYKERVNELDSNTDLQQSLRYVALHFLDQNWVNHLDAMTHLKEGIGLRQYQQEDPTRLYQKEALDIFLYTYGNFEKEMCRYVARHLGVPENVQ.

ATP contacts are provided by residues Gln-86, Gly-104–Thr-108, and Asp-493.

The protein belongs to the SecA family. As to quaternary structure, monomer and homodimer. Part of the essential Sec protein translocation apparatus which comprises SecA, SecYEG and auxiliary proteins SecDF. Other proteins may also be involved.

It localises to the cell membrane. It is found in the cytoplasm. The enzyme catalyses ATP + H2O + cellular proteinSide 1 = ADP + phosphate + cellular proteinSide 2.. Part of the Sec protein translocase complex. Interacts with the SecYEG preprotein conducting channel. Has a central role in coupling the hydrolysis of ATP to the transfer of proteins into and across the cell membrane, serving as an ATP-driven molecular motor driving the stepwise translocation of polypeptide chains across the membrane. The sequence is that of Protein translocase subunit SecA 2 from Bacillus anthracis.